Here is a 383-residue protein sequence, read N- to C-terminus: MKNILPPFIEIYRALIATPSISATEESLDQSNASLITLLAGWFSDLGFNVEVQPVPGTRNKFNMLASTGHGAGGLLLTGHTDTVPFDDGRWTRDPFTLTEHDNKLYGLGTADMKGFFAFILDALRDVDVTKLKKPLYILATADEETSMAGARYFSETTALRPDCAIIGEPTSLQPIRAHKGHISNVVRVLGQSGHSSDPARGVNAIELMHDAIGHIMQLRDSLKARYHYEAFTVPYPTLNLGHIHGGDASNRICACCELHMDIRPLPGMTLNDLNGLLNDALAPVSERWPGRLTVAELHPPIPGYECPPDHQLVEVVEKLLGTKTDVVNYCTEAPFMQTLCPTLVLGPGSINQAHQPDEYLETRFIKPTRELITQVVHHFCWH.

Position 80 (His80) interacts with Zn(2+). Asp82 is an active-site residue. Asp112 serves as a coordination point for Zn(2+). Glu144 is an active-site residue. Zn(2+)-binding residues include Glu145, Glu169, and His355.

The protein belongs to the peptidase M20A family. ArgE subfamily. Homodimer. It depends on Zn(2+) as a cofactor. The cofactor is Co(2+). Requires glutathione as cofactor.

It is found in the cytoplasm. The catalysed reaction is N(2)-acetyl-L-ornithine + H2O = L-ornithine + acetate. Its pathway is amino-acid biosynthesis; L-arginine biosynthesis; L-ornithine from N(2)-acetyl-L-ornithine (linear): step 1/1. Functionally, catalyzes the hydrolysis of the amide bond of N(2)-acetylated L-amino acids. Cleaves the acetyl group from N-acetyl-L-ornithine to form L-ornithine, an intermediate in L-arginine biosynthesis pathway, and a branchpoint in the synthesis of polyamines. In Salmonella agona (strain SL483), this protein is Acetylornithine deacetylase.